The following is a 289-amino-acid chain: Cell division protein ZipA (289 aa).

Position 1 (methionine 1) is a topological domain, periplasmic. The helical transmembrane segment at 2–22 (DIGLREWLIVIGLIVIAGILF) threads the bilayer. At 23-289 (DGWRRMRGGK…HERRSLMQKR (267 aa)) the chain is on the cytoplasmic side. The interval 66 to 141 (REPSFDEQDL…KEREKAPAVA (76 aa)) is disordered. Positions 81–99 (REAKERKGGKRQEEPRQGD) are enriched in basic and acidic residues. Over residues 100 to 114 (LDLDEGLALEADPSD) the composition is skewed to acidic residues.

Belongs to the ZipA family. Interacts with FtsZ via their C-terminal domains.

It localises to the cell inner membrane. Essential cell division protein that stabilizes the FtsZ protofilaments by cross-linking them and that serves as a cytoplasmic membrane anchor for the Z ring. Also required for the recruitment to the septal ring of downstream cell division proteins. This chain is Cell division protein ZipA, found in Pseudomonas aeruginosa (strain LESB58).